Consider the following 391-residue polypeptide: 3-ketoacyl-CoA thiolase, peroxisomal (391 aa).

Cys-92 acts as the Acyl-thioester intermediate in catalysis. Residues His-335 and Cys-366 each act as proton acceptor in the active site.

The protein belongs to the thiolase-like superfamily. Thiolase family. In terms of assembly, homodimer.

The protein localises to the peroxisome. The catalysed reaction is an acyl-CoA + acetyl-CoA = a 3-oxoacyl-CoA + CoA. It functions in the pathway lipid metabolism; fatty acid metabolism. The chain is 3-ketoacyl-CoA thiolase, peroxisomal (FOX3) from Encephalitozoon cuniculi (strain GB-M1) (Microsporidian parasite).